Reading from the N-terminus, the 134-residue chain is MDYAFLGVVTAVLLGSITSLWTASVQATHRLSLDSLWVLVQWYGTMLLGFAMIYMILQANGHHVFTPSPSSAAGNRLSMLEDSLYLSGMTLLSVGYGDVTPVGIGRWIAIAEALLGYIMPAVIVTRTVFDSDRR.

The sequence is that of Protein LctB (lctB) from Geobacillus stearothermophilus (Bacillus stearothermophilus).